The primary structure comprises 533 residues: Sterol 26-hydroxylase, mitochondrial (533 aa).

The transit peptide at 1–32 (MAVLSRMRLRWALLDTRVMGHGLCPQGARAKA) directs the protein to the mitochondrion. The disordered stretch occupies residues 38–58 (LRDHESTEGPGTGQDRPRLRS). Residues Lys142 and Lys375 each carry the N6-acetyllysine modification. A sterol-binding region spans residues 386-400 (PLLKAVIKETLRLYP). A heme-binding site is contributed by Cys479. Residues Lys512 and Lys523 each carry the N6-acetyllysine modification.

Belongs to the cytochrome P450 family. In terms of assembly, interacts with HSP70; this interaction is required for initial targeting to mitochondria. Requires heme as cofactor. In terms of tissue distribution, expressed in liver, kidney and ovary.

The protein resides in the mitochondrion inner membrane. The enzyme catalyses 5beta-cholestane-3alpha,7alpha,12alpha-triol + 6 reduced [adrenodoxin] + 3 O2 + 5 H(+) = (25R)-3alpha,7alpha,12alpha-trihydroxy-5beta-cholestan-26-oate + 6 oxidized [adrenodoxin] + 4 H2O. It carries out the reaction cholestanol + 2 reduced [adrenodoxin] + O2 + 2 H(+) = (25R)-26-hydroxycholestanol + 2 oxidized [adrenodoxin] + H2O. It catalyses the reaction (25R)-3beta-hydroxycholest-5-en-7-one-26-al + 2 reduced [adrenodoxin] + O2 + H(+) = (25R)-3beta-hydroxycholest-5-en-7-one-26-oate + 2 oxidized [adrenodoxin] + H2O. The catalysed reaction is (25R)-3beta,26-dihydroxycholest-5-en-7-one + 2 reduced [adrenodoxin] + O2 + 2 H(+) = (25R)-3beta-hydroxycholest-5-en-7-one-26-al + 2 oxidized [adrenodoxin] + 2 H2O. The enzyme catalyses 7-oxocholesterol + 2 reduced [adrenodoxin] + O2 + 2 H(+) = (25R)-3beta,26-dihydroxycholest-5-en-7-one + 2 oxidized [adrenodoxin] + H2O. It carries out the reaction calciol + 2 reduced [adrenodoxin] + O2 + 2 H(+) = calcidiol + 2 oxidized [adrenodoxin] + H2O. It catalyses the reaction (25R)-5beta-cholestane-3alpha,7alpha,12alpha,26-tetrol + 2 reduced [adrenodoxin] + O2 + 2 H(+) = (25R)-3alpha,7alpha,12alpha-trihydroxy-5beta-cholestan-26-al + 2 oxidized [adrenodoxin] + 2 H2O. The catalysed reaction is 2 reduced [adrenodoxin] + cholesterol + O2 + 2 H(+) = (25R)-cholest-5-ene-3beta,26-diol + 2 oxidized [adrenodoxin] + H2O. The enzyme catalyses (25R)-3beta,4beta-dihydroxycholest-5-en-26-al + 2 reduced [adrenodoxin] + O2 + H(+) = (25R)-3beta,4beta-dihydroxycholest-5-en-26-oate + 2 oxidized [adrenodoxin] + H2O. It carries out the reaction (25R)-4beta,26-dihydroxycholesterol + 2 reduced [adrenodoxin] + O2 + 2 H(+) = (25R)-3beta,4beta-dihydroxycholest-5-en-26-al + 2 oxidized [adrenodoxin] + 2 H2O. It catalyses the reaction 4beta-hydroxycholesterol + 2 reduced [adrenodoxin] + O2 + 2 H(+) = (25R)-4beta,26-dihydroxycholesterol + 2 oxidized [adrenodoxin] + H2O. The catalysed reaction is (25R)-3beta-hydroxy-5-cholesten-26-al + 2 reduced [adrenodoxin] + O2 + H(+) = (25R)-3beta-hydroxy-5-cholestenoate + 2 oxidized [adrenodoxin] + H2O. The enzyme catalyses (25R)-cholest-5-ene-3beta,26-diol + 2 reduced [adrenodoxin] + O2 + 2 H(+) = (25R)-3beta-hydroxy-5-cholesten-26-al + 2 oxidized [adrenodoxin] + 2 H2O. It carries out the reaction (25R)-3alpha,7alpha,12alpha-trihydroxy-5beta-cholestan-26-al + 2 reduced [adrenodoxin] + O2 + H(+) = (25R)-3alpha,7alpha,12alpha-trihydroxy-5beta-cholestan-26-oate + 2 oxidized [adrenodoxin] + H2O. It catalyses the reaction 5beta-cholestane-3alpha,7alpha,12alpha-triol + 2 reduced [adrenodoxin] + O2 + 2 H(+) = (25R)-5beta-cholestane-3alpha,7alpha,12alpha,26-tetrol + 2 oxidized [adrenodoxin] + H2O. It participates in hormone biosynthesis; cholecalciferol biosynthesis. The protein operates within steroid metabolism; cholesterol degradation. It functions in the pathway lipid metabolism; bile acid biosynthesis. In terms of biological role, cytochrome P450 monooxygenase that catalyzes regio- and stereospecific hydroxylation of cholesterol and its derivatives. Hydroxylates (with R stereochemistry) the terminal methyl group of cholesterol side-chain in a three step reaction to yield at first a C26 alcohol, then a C26 aldehyde and finally a C26 acid. Regulates cholesterol homeostasis by catalyzing the conversion of excess cholesterol to bile acids via both the 'neutral' (classic) and the 'acid' (alternative) pathways. May also regulate cholesterol homeostasis via generation of active oxysterols, which act as ligands for NR1H2 and NR1H3 nuclear receptors, modulating the transcription of genes involved in lipid metabolism. Plays a role in cholestanol metabolism in the cerebellum. Similarly to cholesterol, hydroxylates cholestanol and may facilitate sterol diffusion through the blood-brain barrier to the systemic circulation for further degradation. Also hydroxylates retinal 7-ketocholesterol, a noxious oxysterol with pro-inflammatory and pro-apoptotic effects, and may play a role in its elimination from the retinal pigment epithelium. May play a redundant role in vitamin D biosynthesis. Catalyzes 25-hydroxylation of vitamin D3 that is required for its conversion to a functionally active form. The protein is Sterol 26-hydroxylase, mitochondrial (Cyp27a1) of Rattus norvegicus (Rat).